The following is a 426-amino-acid chain: Glutamate-1-semialdehyde 2,1-aminomutase (426 aa).

An N6-(pyridoxal phosphate)lysine modification is found at lysine 268.

The protein belongs to the class-III pyridoxal-phosphate-dependent aminotransferase family. HemL subfamily. It depends on pyridoxal 5'-phosphate as a cofactor.

It localises to the cytoplasm. The catalysed reaction is (S)-4-amino-5-oxopentanoate = 5-aminolevulinate. The protein operates within porphyrin-containing compound metabolism; protoporphyrin-IX biosynthesis; 5-aminolevulinate from L-glutamyl-tRNA(Glu): step 2/2. This Saccharolobus islandicus (strain Y.N.15.51 / Yellowstone #2) (Sulfolobus islandicus) protein is Glutamate-1-semialdehyde 2,1-aminomutase.